A 252-amino-acid polypeptide reads, in one-letter code: Phosphate import ATP-binding protein PstB (252 aa).

The ABC transporter domain maps to valine 5–isoleucine 247. Residue glycine 37–serine 44 participates in ATP binding.

The protein belongs to the ABC transporter superfamily. Phosphate importer (TC 3.A.1.7) family. In terms of assembly, the complex is composed of two ATP-binding proteins (PstB), two transmembrane proteins (PstC and PstA) and a solute-binding protein (PstS).

Its subcellular location is the cell inner membrane. The enzyme catalyses phosphate(out) + ATP + H2O = ADP + 2 phosphate(in) + H(+). Its function is as follows. Part of the ABC transporter complex PstSACB involved in phosphate import. Responsible for energy coupling to the transport system. In Geobacter metallireducens (strain ATCC 53774 / DSM 7210 / GS-15), this protein is Phosphate import ATP-binding protein PstB.